The chain runs to 258 residues: F-box/SPRY domain-containing protein 1 (258 aa).

The F-box domain maps to 6-54 (MEYAPNIPDNVLELIFSFLKLQDLRNCTLVCKSWYRFFCDENNEVWRAQ). The 193-residue stretch at 64–256 (FKNDLLTVVP…ISMVYLGAPL (193 aa)) folds into the B30.2/SPRY domain.

This sequence belongs to the FBXO45/Fsn family. In terms of assembly, component of an E3 ubiquitin ligase complex composed of hiw and Fsn.

It localises to the synapse. The protein operates within protein modification; protein ubiquitination. Functionally, required in the presynaptic motoneuron to down-regulate the levels of wnd and restrain synaptic terminal growth at the neuromuscular junction (NMJ). This chain is F-box/SPRY domain-containing protein 1, found in Anopheles gambiae (African malaria mosquito).